Reading from the N-terminus, the 365-residue chain is Probable 7-methylxanthine methyltransferase 3 (365 aa).

S-adenosyl-L-homocysteine is bound at residue tyrosine 18. Threonine 25 contacts theobromine. S-adenosyl-L-homocysteine is bound by residues cysteine 62, glutamine 67, aspartate 99, leucine 100, serine 132, and phenylalanine 133. Theobromine contacts are provided by tyrosine 150, histidine 153, and tryptophan 154. The Mg(2+) site is built by asparagine 170, phenylalanine 258, and asparagine 259. Theobromine is bound at residue phenylalanine 311.

It belongs to the methyltransferase superfamily. Type-7 methyltransferase family. Requires Mg(2+) as cofactor.

The enzyme catalyses 7-methylxanthine + S-adenosyl-L-methionine = theobromine + S-adenosyl-L-homocysteine + H(+). Its pathway is alkaloid biosynthesis. Functionally, involved in the biosynthesis of theobromine. The chain is Probable 7-methylxanthine methyltransferase 3 from Theobroma cacao (Cacao).